Reading from the N-terminus, the 205-residue chain is Urease accessory protein UreG (205 aa).

12 to 19 (GPVGSGKT) contacts GTP.

Belongs to the SIMIBI class G3E GTPase family. UreG subfamily. As to quaternary structure, homodimer. UreD, UreF and UreG form a complex that acts as a GTP-hydrolysis-dependent molecular chaperone, activating the urease apoprotein by helping to assemble the nickel containing metallocenter of UreC. The UreE protein probably delivers the nickel.

It is found in the cytoplasm. In terms of biological role, facilitates the functional incorporation of the urease nickel metallocenter. This process requires GTP hydrolysis, probably effectuated by UreG. This Pseudomonas savastanoi pv. phaseolicola (strain 1448A / Race 6) (Pseudomonas syringae pv. phaseolicola (strain 1448A / Race 6)) protein is Urease accessory protein UreG.